The primary structure comprises 338 residues: Protein SPATA31F3 (338 aa).

The helical transmembrane segment at 7 to 29 threads the bilayer; that stretch reads VLWDVGYPLYTYGSICIIALIIW. Residue S152 is modified to Phosphoserine. Residues 290-306 show a composition bias toward basic and acidic residues; the sequence is DRTKNIEKSPTVTKDHV. Residues 290 to 338 form a disordered region; that stretch reads DRTKNIEKSPTVTKDHVWGATTQKTTEDPEAQPPSTEEEGLIFCDAPSA.

It belongs to the SPATA31 family.

The protein resides in the membrane. The chain is Protein SPATA31F3 from Homo sapiens (Human).